The primary structure comprises 124 residues: Large ribosomal subunit protein bL12 (124 aa).

The protein belongs to the bacterial ribosomal protein bL12 family. As to quaternary structure, homodimer. Part of the ribosomal stalk of the 50S ribosomal subunit. Forms a multimeric L10(L12)X complex, where L10 forms an elongated spine to which 2 to 4 L12 dimers bind in a sequential fashion. Binds GTP-bound translation factors.

In terms of biological role, forms part of the ribosomal stalk which helps the ribosome interact with GTP-bound translation factors. Is thus essential for accurate translation. The sequence is that of Large ribosomal subunit protein bL12 from Desulforamulus reducens (strain ATCC BAA-1160 / DSM 100696 / MI-1) (Desulfotomaculum reducens).